We begin with the raw amino-acid sequence, 335 residues long: Fructose-1,6-bisphosphatase class 1 (335 aa).

Residues glutamate 91, aspartate 113, leucine 115, and aspartate 116 each contribute to the Mg(2+) site. Substrate-binding positions include aspartate 116–serine 119, asparagine 208, and lysine 274. Glutamate 280 contacts Mg(2+).

This sequence belongs to the FBPase class 1 family. In terms of assembly, homotetramer. Requires Mg(2+) as cofactor.

The protein resides in the cytoplasm. The enzyme catalyses beta-D-fructose 1,6-bisphosphate + H2O = beta-D-fructose 6-phosphate + phosphate. The protein operates within carbohydrate biosynthesis; gluconeogenesis. The chain is Fructose-1,6-bisphosphatase class 1 from Chromobacterium violaceum (strain ATCC 12472 / DSM 30191 / JCM 1249 / CCUG 213 / NBRC 12614 / NCIMB 9131 / NCTC 9757 / MK).